The primary structure comprises 62 residues: Sperm protamine P1 (62 aa).

The segment at 1–62 (MARYRHSRSR…RYSRRRRRRY (62 aa)) is disordered.

The protein belongs to the protamine P1 family. Testis.

The protein localises to the nucleus. The protein resides in the chromosome. Functionally, protamines substitute for histones in the chromatin of sperm during the haploid phase of spermatogenesis. They compact sperm DNA into a highly condensed, stable and inactive complex. This chain is Sperm protamine P1 (PRM1), found in Thylogale stigmatica (Red-legged pademelon).